The chain runs to 360 residues: G-protein coupled receptor 15 (360 aa).

The Extracellular segment spans residues 1 to 33 (MDPEETSVYLDYYYATSPNPDIRETHSHVPYTS). The helical transmembrane segment at 34 to 54 (VFLPVFYIAVFLTGVLGNLVL) threads the bilayer. At 55-69 (MGALHFKPGSRRLID) the chain is on the cytoplasmic side. Residues 70 to 90 (IFIINLAASDFIFLVTLPLWV) traverse the membrane as a helical segment. The Extracellular portion of the chain corresponds to 91 to 120 (DKEASLGLWRTGSFLCKGSSYMISVNMHCS). Residues 121 to 141 (VFLLTCMSVDRYLAIVCPVVS) traverse the membrane as a helical segment. Residues 142 to 149 (RKFRRTDC) lie on the Cytoplasmic side of the membrane. A helical membrane pass occupies residues 150–170 (AYVVCASIWFISCLLGLPTLL). Over 171–192 (SRELTLIDDKPYCAEKKATPLK) the chain is Extracellular. The helical transmembrane segment at 193 to 213 (LIWSLVALIFTFFVPLLSIVT) threads the bilayer. At 214–239 (CYCRIARKLCAHYQQSGKHNKKLKKS) the chain is on the cytoplasmic side. Residues 240–260 (IKIIFIVVAAFLVSWLPFNTS) traverse the membrane as a helical segment. Residues 261 to 284 (KLLAIVSGLQQERYFPSAILQLGM) lie on the Extracellular side of the membrane. The helical transmembrane segment at 285-305 (EVSGPLAFANSCVNPFIYYIF) threads the bilayer. Over 306-360 (DSYIRRAIVHCLCPCLKNYDFGSSTETSDSHLTKALSTFIHAEDFTRRRKRSVSL) the chain is Cytoplasmic. A Phosphoserine modification is found at S359.

It belongs to the G-protein coupled receptor 1 family. As to quaternary structure, interacts with adapter YWHAE; this interaction promotes ER-to-Golgi transport of GPR15. Post-translationally, phosphorylation is necessary for YWHAE binding and efficient surface expression. O-glycosylated. Sialylated O-glycans in the N-terminal tail inhibits binding of GPR15LG. In terms of processing, sulfation is required for efficient binding of GPR15LG.

It is found in the cell membrane. In terms of biological role, g protein-coupled receptor that plays an important role in immune homeostasis. Acts via its natural ligand GPR15LG, a chemokine-like polypeptide strongly expressed in gastrointestinal tissues. GPR15-GPR15LG signaling axis regulates intestinal homeostasis and inflammation through the migration of immune cells. Controls thereby the specific homing of T-cells, particularly FOXP3+ regulatory T-cells (Tregs), to the large intestine lamina propria. Also required for skin localization of thymus-derived dendritic epidermal T-cells. Plays an important role in mediating cytoprotective function as well as angiogenesis of thrombomodulin. Mechanistically, preferentially signals through the Gi/o pathway to inhibit adenylate cyclase activity and activate a phosphatidylinositol-calcium second messenger system that regulates the release of Ca(2+) ions from intracellular stores. The chain is G-protein coupled receptor 15 (GPR15) from Chlorocebus aethiops (Green monkey).